The sequence spans 445 residues: GTPase Der (445 aa).

EngA-type G domains follow at residues 3–167 and 180–353; these read PVIA…NLPD and IKLA…ASAN. Residues 9-16, 56-60, 119-122, 186-193, 233-237, and 298-301 each bind GTP; these read GRPNVGKS, DTGGF, NKAE, DTAGL, and NKWD. The KH-like domain maps to 354 to 438; that stretch reads RKMSTPVLTR…PLRIQLKSSV (85 aa).

The protein belongs to the TRAFAC class TrmE-Era-EngA-EngB-Septin-like GTPase superfamily. EngA (Der) GTPase family. Associates with the 50S ribosomal subunit.

Its function is as follows. GTPase that plays an essential role in the late steps of ribosome biogenesis. This is GTPase Der from Polaromonas naphthalenivorans (strain CJ2).